The primary structure comprises 418 residues: Ceramide synthase LAC1 (418 aa).

Polar residues predominate over residues 1 to 14; it reads MSTIKPSPSNNNLK. Residues 1 to 25 form a disordered region; it reads MSTIKPSPSNNNLKVRSRPRRKSSI. Residue Ser2 is modified to N-acetylserine. Residues 2–81 are Cytoplasmic-facing; it reads STIKPSPSNN…WFSFREISYR (80 aa). A compositionally biased stretch (basic residues) spans 15–24; it reads VRSRPRRKSS. Ser23 and Ser24 each carry phosphoserine. A helical transmembrane segment spans residues 82–102; sequence HAWIAPLMILIAVYSAYFTSG. Asn103 is a glycosylation site (N-linked (GlcNAc...) asparagine). The Lumenal segment spans residues 103–130; the sequence is NTTKTNVLHRFVAVSYQIGDTNAYGKGI. The chain crosses the membrane as a helical span at residues 131 to 155; sequence NDLCFVFYYMIFFTFLREFLMDVVI. Residues 156–172 lie on the Cytoplasmic side of the membrane; that stretch reads RPFAIRLHVTSKHRIKR. Positions 168-385 constitute a TLC domain; that stretch reads HRIKRIMEQM…FRVLYRILWR (218 aa). 3 residues coordinate fumonisin B1: Arg169, Arg172, and Tyr182. Residues 173–194 form a helical membrane-spanning segment; it reads IMEQMYAIFYTGVSGPFGIYCM. The Lumenal portion of the chain corresponds to 195–217; the sequence is YHSDLWFFNTKAMYRTYPDFTNP. A helical membrane pass occupies residues 218–240; sequence FLFKVFYLGQAAFWAQQACILVL. Residues Tyr224 and Trp231 each coordinate hexacosanoate. Fumonisin B1 is bound at residue Trp231. Position 231 (Trp231) interacts with hexacosanoyl-CoA. Over 241-249 the chain is Cytoplasmic; the sequence is QLEKPRKDH. Residues 250–268 form a helical membrane-spanning segment; the sequence is NELTFHHIVTLLLIWSSYV. Residue His255 coordinates fumonisin B1. Hexacosanoate-binding residues include His255, Thr259, Leu262, Ile263, Ser265, Ser266, Phe269, Phe271, Met274, Gly275, Ile278, Tyr279, Met282, Asp283, and Asp286. Positions 255, 259, and 262 each coordinate hexacosanoyl-CoA. The hexacosanoyl-CoA site is built by Ser265 and Ser266. Residues 269–273 are Lumenal-facing; sequence FHFTK. Hexacosanoyl-CoA is bound by residues Phe271, Met274, Gly275, Ile278, Tyr279, and Met282. The helical transmembrane segment at 274 to 295 threads the bilayer; sequence MGLPIYITMDVSDFLLSFSKTL. Positions 286, 289, 293, 296, 297, 303, 304, 307, and 314 each coordinate fumonisin B1. Hexacosanoyl-CoA-binding residues include Asp286, Leu289, Lys293, and Asn296. The Cytoplasmic segment spans residues 296–305; the sequence is NYLDSGLAFF. Residues 306–334 traverse the membrane as a helical segment; the sequence is SFAIFVVAWIYLRHYINLKILWSVLTQFR. Position 307 (Phe307) interacts with hexacosanoyl-CoA. Positions 318, 343, 348, 352, 353, 356, 357, 360, 361, and 371 each coordinate hexacosanoate. Arg318 lines the hexacosanoyl-CoA pocket. Residues 335–353 are Lumenal-facing; it reads TEGNYVLNFATQQYKCWIS. The hexacosanoyl-CoA site is built by Tyr348, Ile352, Ser353, Ile356, Val357, and Leu360. A helical transmembrane segment spans residues 354-382; that stretch reads LPIVFVLIGALQLVNLYWLFLIFRVLYRI. Positions 371, 375, 378, 382, and 385 each coordinate fumonisin B1. Trp371 contacts hexacosanoyl-CoA. Over 383-418 the chain is Cytoplasmic; the sequence is LWRGILKDDRSDSESDEESDESSTTPTDSTPTKKDI. The tract at residues 390–418 is disordered; it reads DDRSDSESDEESDESSTTPTDSTPTKKDI.

It belongs to the sphingosine N-acyltransferase family. In terms of assembly, component of the ceramide synthase complex composed of at least LAC1, LAG1 and LIP1. Forms a heterotetrameric complex, where one unit of the LIP1 homodimer interacts with LAC1 and the other with either LAC1 or LAG1. Post-translationally, phosphorylated; phosphorylation is induced upon disruption of sphingolipid synthesis. Phosphorylation is inhibited by exogenous addition of phytosphingosine.

It localises to the endoplasmic reticulum membrane. The catalysed reaction is a very long-chain fatty acyl-CoA + a sphingoid base = an N-(very-long-chain fatty acyl)-sphingoid base + CoA + H(+). It carries out the reaction hexacosanoyl-CoA + sphinganine = N-hexacosanoylsphinganine + CoA + H(+). The enzyme catalyses eicosanoyl-CoA + sphinganine = N-eicosanoylsphinganine + CoA + H(+). It catalyses the reaction a fatty acyl-CoA + sphinganine = an N-acylsphinganine + CoA + H(+). The catalysed reaction is (4R)-hydroxysphinganine + a fatty acyl-CoA = an N-acyl-(4R)-4-hydroxysphinganine + CoA + H(+). It functions in the pathway lipid metabolism; sphingolipid metabolism. Its activity is regulated as follows. As part of the ceramide synthase complex, inhibited by the sphinganine analog mycotoxin, fumonisin B1 (FB1). Activated by ACB1, as part of the ceramide synthase complex. In terms of biological role, component of the ceramide synthase complex that catalyzes the transfer of the acyl chain from acyl-CoA to a sphingoid base, with high selectivity toward hexacosanoyl-CoA (C26:0-CoA). N-acylates sphinganine and phytosphingosine bases to form dihydroceramides and phytoceramides, respectively. Redundant with LAG1. Facilitates ER-to-Golgi transport of GPI-anchored proteins. Has a lower affinity for phytosphingosine (PHS) than dihydrosphingosine (DHS); PHS is required for the synthesis of phytoceramides and the formation of nuclear envelopes. Along with LAG1, plays a role in pheromone-induced MAP kinase-activation of mating and formation of diploid cells. May also play a role, together with LAG1, in the polarized membrane distribution of phosphatidylinositol 4,5 biphosphate required for STE5 localization to the plasma membrane. The sequence is that of Ceramide synthase LAC1 (LAC1) from Saccharomyces cerevisiae (strain ATCC 204508 / S288c) (Baker's yeast).